Consider the following 271-residue polypeptide: Ribosomal RNA small subunit methyltransferase A (271 aa).

The S-adenosyl-L-methionine site is built by His11, Leu13, Gly38, Glu59, Asp84, and Asn109.

The protein belongs to the class I-like SAM-binding methyltransferase superfamily. rRNA adenine N(6)-methyltransferase family. RsmA subfamily.

Its subcellular location is the cytoplasm. It carries out the reaction adenosine(1518)/adenosine(1519) in 16S rRNA + 4 S-adenosyl-L-methionine = N(6)-dimethyladenosine(1518)/N(6)-dimethyladenosine(1519) in 16S rRNA + 4 S-adenosyl-L-homocysteine + 4 H(+). In terms of biological role, specifically dimethylates two adjacent adenosines (A1518 and A1519) in the loop of a conserved hairpin near the 3'-end of 16S rRNA in the 30S particle. May play a critical role in biogenesis of 30S subunits. The sequence is that of Ribosomal RNA small subunit methyltransferase A from Trichormus variabilis (strain ATCC 29413 / PCC 7937) (Anabaena variabilis).